Here is a 444-residue protein sequence, read N- to C-terminus: Tryptophan 5-hydroxylase 1 (444 aa).

The ACT domain occupies 19 to 94 (TLIFSLKNEV…NVLSVTPPDN (76 aa)). Serine 58 bears the Phosphoserine; by PKA mark. Residues tyrosine 235, arginine 257, and threonine 265 each contribute to the L-tryptophan site. 3 residues coordinate Fe cation: histidine 272, histidine 277, and glutamate 317. 2 residues coordinate L-tryptophan: serine 336 and isoleucine 366.

The protein belongs to the biopterin-dependent aromatic amino acid hydroxylase family. In terms of assembly, homotetramer. Interacts with DNAJC12. It depends on Fe(2+) as a cofactor. In terms of processing, ubiquitinated, leading to its degradation by the proteasome. Ubiquitinated is triggered by phosphorylation. Post-translationally, phosphorylated; triggering degradation by the proteasome.

The catalysed reaction is (6R)-L-erythro-5,6,7,8-tetrahydrobiopterin + L-tryptophan + O2 = 5-hydroxy-L-tryptophan + (4aS,6R)-4a-hydroxy-L-erythro-5,6,7,8-tetrahydrobiopterin. It functions in the pathway aromatic compound metabolism; serotonin biosynthesis; serotonin from L-tryptophan: step 1/2. In terms of biological role, oxidizes L-tryptophan to 5-hydroxy-l-tryptophan in the rate-determining step of serotonin biosynthesis. This chain is Tryptophan 5-hydroxylase 1 (TPH1), found in Oryctolagus cuniculus (Rabbit).